The following is a 501-amino-acid chain: Trans-cinnamate 4-monooxygenase (501 aa).

A helical membrane pass occupies residues 3–23; that stretch reads LVLLEKALLGLFAAAVLAVAV. Residues 213-218 and Ala302 contribute to the (E)-cinnamate site; that span reads RSRLSQ. Position 443 (Cys443) interacts with heme.

The protein belongs to the cytochrome P450 family. The cofactor is heme.

It is found in the membrane. It catalyses the reaction (E)-cinnamate + reduced [NADPH--hemoprotein reductase] + O2 = (E)-4-coumarate + oxidized [NADPH--hemoprotein reductase] + H2O + H(+). Its pathway is phenylpropanoid metabolism; trans-4-coumarate biosynthesis; trans-4-coumarate from trans-cinnamate: step 1/1. Its function is as follows. Catalyzes the first oxidative step of the phenylpropanoid pathway in higher plants by transforming trans-cinnamate into p-coumarate. The compounds formed by this pathway are essential components for lignification, pollination, and defense against ultraviolet light, predators and pathogens. Can also use 2-naphthoic acid as substrate. The chain is Trans-cinnamate 4-monooxygenase from Sorghum bicolor (Sorghum).